The chain runs to 427 residues: MTAIVDIIGREILDSRGNPTVEVDVVLEDGSVGRAAVPSGASTGAHEAVELRDGDKARYLGKGVQKAVEAVNGELFDALGGMDAEQQVQIDQTMIELDGTPNKGRIGANAILGVSLAAAKAAAASYDMPLYRYVGGTSARTLPVPMMNIVNGGVHADNPIDFQEFMIMPVGAPTFADALRCGSEIFHTLKGELKKAGHNTNVGDEGGFAPNLPSADAALDFVMAAIGKAGYKAGDDVMLALDCAATEFFKDGAYVYGGENKTRSRSEQAKYLADLVARYPIVSIEDGMSEDDMDGWKELTDLIGSKCQLVGDDLFVTNVTRLADGIKNGRANSILIKVNQIGTLTETLAAVEMAHKAGYTAVMSHRSGETEDSTIADLAVATNCGQIKTGSLARADRTAKYNQLLRIEQELGAHAHYAGKAALKALR.

Gln-163 is a (2R)-2-phosphoglycerate binding site. The active-site Proton donor is the Glu-205. Residues Asp-242, Glu-285, and Asp-312 each coordinate Mg(2+). Lys-337, Arg-366, Ser-367, and Lys-388 together coordinate (2R)-2-phosphoglycerate. The active-site Proton acceptor is the Lys-337.

This sequence belongs to the enolase family. Mg(2+) is required as a cofactor.

It localises to the cytoplasm. The protein localises to the secreted. The protein resides in the cell surface. The catalysed reaction is (2R)-2-phosphoglycerate = phosphoenolpyruvate + H2O. It participates in carbohydrate degradation; glycolysis; pyruvate from D-glyceraldehyde 3-phosphate: step 4/5. Catalyzes the reversible conversion of 2-phosphoglycerate (2-PG) into phosphoenolpyruvate (PEP). It is essential for the degradation of carbohydrates via glycolysis. This Rhodopseudomonas palustris (strain TIE-1) protein is Enolase.